A 208-amino-acid polypeptide reads, in one-letter code: Uracil phosphoribosyltransferase (208 aa).

5-phospho-alpha-D-ribose 1-diphosphate-binding positions include R78, R103, and 130–138; that span reads DPMLATGGS. Uracil contacts are provided by residues I193 and 198–200; that span reads GDA. A 5-phospho-alpha-D-ribose 1-diphosphate-binding site is contributed by D199.

This sequence belongs to the UPRTase family. It depends on Mg(2+) as a cofactor.

It catalyses the reaction UMP + diphosphate = 5-phospho-alpha-D-ribose 1-diphosphate + uracil. Its pathway is pyrimidine metabolism; UMP biosynthesis via salvage pathway; UMP from uracil: step 1/1. Its activity is regulated as follows. Allosterically activated by GTP. Functionally, catalyzes the conversion of uracil and 5-phospho-alpha-D-ribose 1-diphosphate (PRPP) to UMP and diphosphate. This Mannheimia succiniciproducens (strain KCTC 0769BP / MBEL55E) protein is Uracil phosphoribosyltransferase.